A 92-amino-acid polypeptide reads, in one-letter code: Long neurotoxin 469 (92 aa).

Positions 1–21 are cleaved as a signal peptide; sequence MKTLLLTLVVVTIVCLDLGDS. 5 disulfide bridges follow: Cys-24–Cys-41, Cys-34–Cys-62, Cys-47–Cys-51, Cys-66–Cys-77, and Cys-78–Cys-83.

It belongs to the three-finger toxin family. Long-chain subfamily. Type II alpha-neurotoxin sub-subfamily. In terms of tissue distribution, expressed by the venom gland.

Its subcellular location is the secreted. In terms of biological role, binds with high affinity to muscular (alpha-1/CHRNA1) and neuronal (alpha-7/CHRNA7) nicotinic acetylcholine receptor (nAChR) and inhibits acetylcholine from binding to the receptor, thereby impairing neuromuscular and neuronal transmission. The protein is Long neurotoxin 469 of Drysdalia coronoides (White-lipped snake).